A 211-amino-acid polypeptide reads, in one-letter code: Phosphoribosyl-dephospho-CoA transferase (211 aa).

Catalysis depends on residues Asp-136 and Asp-138.

Belongs to the MdcG family.

It catalyses the reaction apo-[malonate decarboxylase ACP] + 2'-(5''-triphospho-alpha-D-ribosyl)-3'-dephospho-CoA = holo-[malonate decarboxylase ACP] + diphosphate. Its function is as follows. Transfers 2'-(5-triphosphoribosyl)-3'-dephosphocoenzyme-A to the apo-[acyl-carrier-protein] of the malonate decarboxylase to yield holo-[acyl-carrier-protein]. The chain is Phosphoribosyl-dephospho-CoA transferase from Pseudomonas syringae pv. tomato (strain ATCC BAA-871 / DC3000).